We begin with the raw amino-acid sequence, 239 residues long: Ribosomal RNA small subunit methyltransferase G (239 aa).

Residues Gly77, Phe82, 128-129 (AE), and Arg147 contribute to the S-adenosyl-L-methionine site. A disordered region spans residues 216 to 239 (KKQSQTPKKFPRKPGTPNKSPIEG).

This sequence belongs to the methyltransferase superfamily. RNA methyltransferase RsmG family.

The protein resides in the cytoplasm. Its function is as follows. Specifically methylates the N7 position of guanine in position 535 of 16S rRNA. This is Ribosomal RNA small subunit methyltransferase G from Bacillus licheniformis (strain ATCC 14580 / DSM 13 / JCM 2505 / CCUG 7422 / NBRC 12200 / NCIMB 9375 / NCTC 10341 / NRRL NRS-1264 / Gibson 46).